The chain runs to 150 residues: UPF0756 membrane protein Asuc_1151 (150 aa).

The next 4 helical transmembrane spans lie at 1–21 (MSLH…LGVL), 52–72 (YGLN…IVAG), 82–102 (LLHW…WLAG), and 123–143 (ILGV…AGIL).

It belongs to the UPF0756 family.

It localises to the cell membrane. The polypeptide is UPF0756 membrane protein Asuc_1151 (Actinobacillus succinogenes (strain ATCC 55618 / DSM 22257 / CCUG 43843 / 130Z)).